The following is a 318-amino-acid chain: tRNA dimethylallyltransferase (318 aa).

Position 16–23 (16–23) interacts with ATP; the sequence is GPTASGKS. Substrate is bound at residue 18–23; that stretch reads TASGKS. Interaction with substrate tRNA regions lie at residues 41–44 and 165–169; these read DSRQ and QRLIR.

Belongs to the IPP transferase family. In terms of assembly, monomer. Mg(2+) serves as cofactor.

The enzyme catalyses adenosine(37) in tRNA + dimethylallyl diphosphate = N(6)-dimethylallyladenosine(37) in tRNA + diphosphate. Catalyzes the transfer of a dimethylallyl group onto the adenine at position 37 in tRNAs that read codons beginning with uridine, leading to the formation of N6-(dimethylallyl)adenosine (i(6)A). This chain is tRNA dimethylallyltransferase, found in Pelodictyon phaeoclathratiforme (strain DSM 5477 / BU-1).